We begin with the raw amino-acid sequence, 30 residues long: Glutathione S-transferase (30 aa).

Belongs to the GST superfamily. Monomer and homodimer.

It localises to the cytoplasm. The enzyme catalyses RX + glutathione = an S-substituted glutathione + a halide anion + H(+). In terms of biological role, conjugation of reduced glutathione to a wide number of exogenous and endogenous hydrophobic electrophiles. This is Glutathione S-transferase from Pseudomonas fluorescens.